Reading from the N-terminus, the 40-residue chain is Beta-defensin 1 (40 aa).

Disulfide bonds link Cys7–Cys35, Cys14–Cys29, and Cys19–Cys36. Glycine amide is present on Gly40.

Monomer. Homodimer.

The protein localises to the secreted. The protein resides in the membrane. Has antimicrobial activity against the Gram-positive bacteria methicillin-resistant S.aureus ATCC 33591 and L.monocytogenes EGD, the Gram-negative bacterium E.coli ML53p and the yeast C.albicans 820. Has no hemolytic activity towards human erythrocytes. In Emys orbicularis (European pond turtle), this protein is Beta-defensin 1.